The following is a 552-amino-acid chain: Putative transport protein YPTS_4123 (552 aa).

6 consecutive transmembrane segments (helical) span residues 1–21 (MSAI…GLWI), 26–46 (IYGV…VGHF), 65–85 (FGLI…FFSS), 96–116 (FAIL…KLFA), 119–139 (LPII…LGAA), and 158–178 (MGYA…MWLI). 2 consecutive RCK C-terminal domains span residues 192 to 276 (AFDS…VVGE) and 279 to 361 (DVTL…IVGN). A run of 6 helical transmembrane segments spans residues 371–391 (MLPV…PLFV), 393–413 (GFPA…ALIL), 439–459 (IVLF…NTLV), 464–484 (LAWI…VGIL), 493–513 (YLTL…LAFA), and 530–550 (VYPL…VLFW).

The protein belongs to the AAE transporter (TC 2.A.81) family. YidE subfamily.

Its subcellular location is the cell membrane. This is Putative transport protein YPTS_4123 from Yersinia pseudotuberculosis serotype IB (strain PB1/+).